The following is a 485-amino-acid chain: MIMLLMVGMLMAPCVGAHALDTPNPQELPPGLSKNINITFFNGVFKNVESVAEIFDCLGSHFTWLQAVFTNFPLLLQFVNSMRCVTGLCPRDFEDYGCACRFEMEGMPVDESDICCFQHRRCYEEAVEMDCLQDPAKLSADVDCTNKQITCESEDPCERLLCTCDKAAVECLAQSGINSSLNFLDASFCLPQTPETTSGKAATLLPRGIPEKPTDTSQIALSGEVAGEVRADTLTTLSRTKSVQDLQDTQASRTTSSPGSAEIIALAKGTTHSAGIKPLRLGVSSVDNGSQEAAGKACDRLAFVHLGDGDSMTAMLQLGEMLFCLTSHCPEEFETYGCYCGREGRGEPRDTLDRCCLSHHCCLEQMRQVGCLHGRRSQSSVVCEDHMAKCVGQSLCEKLLCACDQMAAECMASAFFNQSLKSPDGAECQGEPVSCEDGMLQGTLASSVDSSSEENSEEAPPQMERLRRFLEKPPGPLGARPLGGK.

Positions 1–17 (MIMLLMVGMLMAPCVGA) are cleaved as a signal peptide. An N-linked (GlcNAc...) asparagine glycan is attached at Asn-37. Residues 75–189 (LLQFVNSMRC…SLNFLDASFC (115 aa)) form a phospholipase A2-like 1 region. 7 cysteine pairs are disulfide-bonded: Cys-84-Cys-144, Cys-98-Cys-189, Cys-100-Cys-116, Cys-115-Cys-171, Cys-122-Cys-164, Cys-131-Cys-157, and Cys-151-Cys-162. N-linked (GlcNAc...) asparagine glycans are attached at residues Asn-178 and Asn-288. 2 phospholipase A2-like regions span residues 315 to 371 (MLQL…QVGC) and 383 to 435 (CEDH…PVSC). A glycan (N-linked (GlcNAc...) asparagine) is linked at Asn-417. Positions 444–485 (LASSVDSSSEENSEEAPPQMERLRRFLEKPPGPLGARPLGGK) are disordered.

This sequence belongs to the phospholipase A2 family. As to quaternary structure, interacts with OTOL1. As to expression, in the embryo, highly expressed in the developing otocyst with weak expression in the brain. Also expressed in nonsensory epithelia of both the vestibular and cochlear portions of the developing inner ear. Not expressed in adult or embryonic macular sensory epithelia.

The protein resides in the secreted. Functionally, major protein of the otoconia, a calcium carbonate structure in the saccule and utricle of the ear. Together with OTOL1, acts as a scaffold for otoconia biomineralization: sequesters calcium and forms interconnecting fibrils between otoconia that are incorporated into the calcium crystal structure. Together with OTOL1, modulates calcite crystal morphology and growth kinetics. It is unlikely that this protein has phospholipase A2 activity. This chain is Otoconin-90, found in Mus musculus (Mouse).